A 359-amino-acid chain; its full sequence is 3-isopropylmalate dehydrogenase (359 aa).

Substrate is bound by residues Arg-97, Arg-107, Arg-135, and Asp-224. The Mg(2+) site is built by Asp-224, Asp-248, and Asp-252. 282–294 (GSAPDIAGKDIAN) is a binding site for NAD(+).

The protein belongs to the isocitrate and isopropylmalate dehydrogenases family. LeuB type 1 subfamily. As to quaternary structure, homodimer. Mg(2+) serves as cofactor. Mn(2+) is required as a cofactor.

Its subcellular location is the cytoplasm. The enzyme catalyses (2R,3S)-3-isopropylmalate + NAD(+) = 4-methyl-2-oxopentanoate + CO2 + NADH. The protein operates within amino-acid biosynthesis; L-leucine biosynthesis; L-leucine from 3-methyl-2-oxobutanoate: step 3/4. Catalyzes the oxidation of 3-carboxy-2-hydroxy-4-methylpentanoate (3-isopropylmalate) to 3-carboxy-4-methyl-2-oxopentanoate. The product decarboxylates to 4-methyl-2 oxopentanoate. The protein is 3-isopropylmalate dehydrogenase of Prochlorococcus marinus (strain NATL2A).